The sequence spans 394 residues: MSKEKFQRVKPHINVGTIGHVDHGKTTLTAAITTVLSKKYGGSARAFDQIDNAPEEKARGITINTSHVEYDTELRHYAHVDCPGHADYIKNMITGAAQMDGAILVVAATDGPMPQTREHILLGRQVGVPYIIVFLNKCDMVDDEELLELVEMEVRDLLTQYDFPGDDTPIIRGSALKALEGDADWESKILDLSKFLDTYIPEPKRAIDQPFLLPIEDVFSISGRGTVVTGRVERGIVKVGEEVEIVGIKKTTKTTCTGVEMFRKLLDEGRAGENVGVLLRGTKRDEIERGQVLAKPGSIHPHTTFESEVYVLSKEEGGRHTPFFKGYRPQFYFRTTDVTGSIELPEGVEMVMPGDNIKMTVTLIHPIAMADGLRFAIREGGRTVGAGVVSKVLV.

A tr-type G domain is found at 10–204 (KPHINVGTIG…FLDTYIPEPK (195 aa)). The G1 stretch occupies residues 19–26 (GHVDHGKT). 19 to 26 (GHVDHGKT) contacts GTP. Mg(2+) is bound at residue Thr26. The tract at residues 60–64 (GITIN) is G2. A G3 region spans residues 81–84 (DCPG). GTP is bound by residues 81 to 85 (DCPGH) and 136 to 139 (NKCD). The G4 stretch occupies residues 136–139 (NKCD). The interval 174–176 (SAL) is G5.

This sequence belongs to the TRAFAC class translation factor GTPase superfamily. Classic translation factor GTPase family. EF-Tu/EF-1A subfamily. In terms of assembly, monomer.

Its subcellular location is the cytoplasm. It carries out the reaction GTP + H2O = GDP + phosphate + H(+). Its function is as follows. GTP hydrolase that promotes the GTP-dependent binding of aminoacyl-tRNA to the A-site of ribosomes during protein biosynthesis. This chain is Elongation factor Tu, found in Buchnera aphidicola subsp. Schizaphis graminum (strain Sg).